Consider the following 397-residue polypeptide: 3-hydroxy-3-methylglutaryl-coenzyme A reductase (397 aa).

Residues Glu96 and Asp301 each act as charge relay system in the active site. Residue His391 is the Proton donor of the active site.

It belongs to the HMG-CoA reductase family.

The enzyme catalyses (R)-mevalonate + 2 NADP(+) + CoA = (3S)-3-hydroxy-3-methylglutaryl-CoA + 2 NADPH + 2 H(+). The protein operates within metabolic intermediate biosynthesis; (R)-mevalonate biosynthesis; (R)-mevalonate from acetyl-CoA: step 3/3. Converts HMG-CoA to mevalonate. The sequence is that of 3-hydroxy-3-methylglutaryl-coenzyme A reductase (hmgA) from Methanothermobacter thermautotrophicus (strain ATCC 29096 / DSM 1053 / JCM 10044 / NBRC 100330 / Delta H) (Methanobacterium thermoautotrophicum).